A 441-amino-acid chain; its full sequence is Ribulose bisphosphate carboxylase (441 aa).

Lys160 (proton acceptor) is an active-site residue. Residue Lys162 coordinates substrate. Lys186, Asp188, and Glu189 together coordinate Mg(2+). Residue Lys186 is modified to N6-carboxylysine. His278 serves as the catalytic Proton acceptor. Residues Arg279, His311, 364–366, and 386–389 contribute to the substrate site; these read SGG and QVGG.

Belongs to the RuBisCO large chain family. Type III subfamily. As to quaternary structure, homodimer. In contrast to form I RuBisCO, the form III RuBisCO is composed solely of large subunits. The cofactor is Mg(2+).

It catalyses the reaction 2 (2R)-3-phosphoglycerate + 2 H(+) = D-ribulose 1,5-bisphosphate + CO2 + H2O. It carries out the reaction D-ribulose 1,5-bisphosphate + O2 = 2-phosphoglycolate + (2R)-3-phosphoglycerate + 2 H(+). Reversibly inhibited by O(2). Its function is as follows. Catalyzes the addition of molecular CO(2) and H(2)O to ribulose 1,5-bisphosphate (RuBP), generating two molecules of 3-phosphoglycerate (3-PGA). Functions in an archaeal AMP degradation pathway, together with AMP phosphorylase and R15P isomerase. The sequence is that of Ribulose bisphosphate carboxylase from Archaeoglobus fulgidus (strain ATCC 49558 / DSM 4304 / JCM 9628 / NBRC 100126 / VC-16).